We begin with the raw amino-acid sequence, 498 residues long: Cytochrome P450 71B5 (498 aa).

A helical membrane pass occupies residues 3–23 (IFLCFLLLLPLSLIFLKKLLP). Position 439 (C439) interacts with heme.

It belongs to the cytochrome P450 family. Heme serves as cofactor.

It is found in the membrane. The chain is Cytochrome P450 71B5 (CYP71B5) from Arabidopsis thaliana (Mouse-ear cress).